We begin with the raw amino-acid sequence, 201 residues long: NADH-ubiquinone oxidoreductase 21.3 kDa subunit (201 aa).

As to quaternary structure, complex I is composed of about 40 different subunits.

It is found in the mitochondrion inner membrane. The enzyme catalyses a ubiquinone + NADH + 5 H(+)(in) = a ubiquinol + NAD(+) + 4 H(+)(out). Transfer of electrons from NADH to the respiratory chain. The immediate electron acceptor for the enzyme is believed to be ubiquinone. This is NADH-ubiquinone oxidoreductase 21.3 kDa subunit from Neurospora crassa (strain ATCC 24698 / 74-OR23-1A / CBS 708.71 / DSM 1257 / FGSC 987).